The chain runs to 46 residues: KSCCRNTLARNCYNACRFTGGSQPTCGILCDCIHVTTTTCPSSHPS.

4 disulfide bridges follow: Cys3-Cys40, Cys4-Cys32, Cys12-Cys30, and Cys16-Cys26.

This sequence belongs to the plant thionin (TC 1.C.44) family. 4 C-C subfamily.

The protein resides in the secreted. In terms of biological role, thionins are small plant proteins which are toxic to animal cells. They seem to exert their toxic effect at the level of the cell membrane. Their precise function is not known. This Helleborus purpurascens (Purple hellebore) protein is Hellethionin-D.